The following is a 193-amino-acid chain: DNA dC-&gt;dU-editing enzyme APOBEC-3H (193 aa).

Positions 24–126 constitute a CMP/dCMP-type deaminase domain; sequence YRRKTYLCYQ…WKYQQGLRHL (103 aa). Residue His-54 coordinates Zn(2+). Glu-56 serves as the catalytic Proton donor. Cys-85 and Cys-88 together coordinate Zn(2+).

Belongs to the cytidine and deoxycytidylate deaminase family. In terms of assembly, homodimer. It depends on Zn(2+) as a cofactor. As to expression, expressed in peripheral blood mononuclear cells.

The protein localises to the cytoplasm. It catalyses the reaction a 2'-deoxycytidine in single-stranded DNA + H2O + H(+) = a 2'-deoxyuridine in single-stranded DNA + NH4(+). Its function is as follows. DNA deaminase (cytidine deaminase) which acts as an inhibitor of retrovirus replication and retrotransposon mobility via deaminase-dependent and -independent mechanisms. Selectively targets single-stranded DNA and does not deaminate double-stranded DNA or single- or double-stranded RNA. Exhibits single-stranded DNA deaminase activity (in vitro). Incorporates into the released virions of the virion infectivity factor (vif)-deficient feline immunodeficiency virus (FIV) and suppresses FIV infectivity, probably in a deaminase-dependent manner (in vitro). Induces G-to-A hypermutations in vif-deficient FIV (in vitro). The APOBEC3H/APOBEC3Z3 haplotype 5 exhibits antiviral activity against vif-proficient FIV, strains Petaluma, C36 and Shizuoka (in vitro). Does not exhibit inhibitory activity against feline leukemia virus (FeLV), feline endogenous retrovirus (RD-114 virus) or a long interspersed nuclear element-1 (LINE-1) retrotransposon (in vitro). This Felis catus (Cat) protein is DNA dC-&gt;dU-editing enzyme APOBEC-3H.